A 367-amino-acid chain; its full sequence is Putative threonine-phosphate decarboxylase (367 aa).

O-phospho-L-threonine is bound by residues 12–13 (HG), N29, and N152. Position 213 is an N6-(pyridoxal phosphate)lysine (K213). O-phospho-L-threonine is bound by residues R320 and R334.

Belongs to the class-II pyridoxal-phosphate-dependent aminotransferase family. It depends on pyridoxal 5'-phosphate as a cofactor.

It catalyses the reaction O-phospho-L-threonine + H(+) = (R)-1-aminopropan-2-yl phosphate + CO2. Its pathway is cofactor biosynthesis; adenosylcobalamin biosynthesis. Its function is as follows. Decarboxylates L-threonine-O-3-phosphate to yield (R)-1-amino-2-propanol O-2-phosphate, the precursor for the linkage between the nucleotide loop and the corrin ring in cobalamin. The sequence is that of Putative threonine-phosphate decarboxylase (cobD) from Caldanaerobacter subterraneus subsp. tengcongensis (strain DSM 15242 / JCM 11007 / NBRC 100824 / MB4) (Thermoanaerobacter tengcongensis).